Here is a 296-residue protein sequence, read N- to C-terminus: HTH-type transcriptional activator AmpR (296 aa).

The HTH lysR-type domain maps to 6–63 (LPLNALRAFEASARHLSFTRAAIELCVTQAAVSHQVKSLEERLGVALFKRLPRGLMLT). Residues 23–42 (FTRAAIELCVTQAAVSHQVK) constitute a DNA-binding region (H-T-H motif). An includes the LysR substrate-binding / effector-binding domain, involved in binding to specific cell-wall-derived muropeptide products, some of which have signaling functions, leading to disparate responses such as antibiotic resistance, virulence, and host cell inflammation region spans residues 83-296 (LLERFEGGHY…EMAAVEARGR (214 aa)). Positions 91 to 289 (HYRDVLTVGA…AFRGWLLEMA (199 aa)) constitute a LysR substrate-binding domain.

It belongs to the LysR transcriptional regulatory family. As to quaternary structure, homodimer.

The protein resides in the cytoplasm. The protein localises to the membrane. Its function is as follows. Transcription regulator that plays a critical role in the expression of beta-lactamase AmpC, acting by positive regulation of the ampC gene. Has a wider role in the regulation of expression of genes involved in proteolysis, quorum sensing, and virulence. Acts by binding directly to the promoter region of the ampC gene. Probably does not regulate transcription of its own gene. The chain is HTH-type transcriptional activator AmpR (ampR) from Pseudomonas aeruginosa (strain ATCC 15692 / DSM 22644 / CIP 104116 / JCM 14847 / LMG 12228 / 1C / PRS 101 / PAO1).